Consider the following 514-residue polypeptide: tRNA-2-methylthio-N(6)-dimethylallyladenosine synthase (514 aa).

In terms of domain architecture, MTTase N-terminal spans 68-186 (RTFLIKTYGC…LPEILEEAYL (119 aa)). Residues C77, C113, C147, C223, C227, and C230 each coordinate [4Fe-4S] cluster. Residues 209 to 439 (REGSTKAWVN…NKKVGHYSEK (231 aa)) form the Radical SAM core domain. The TRAM domain maps to 442–505 (NQYEGKTVTV…QYSLNGTFKE (64 aa)).

It belongs to the methylthiotransferase family. MiaB subfamily. Monomer. The cofactor is [4Fe-4S] cluster.

Its subcellular location is the cytoplasm. The catalysed reaction is N(6)-dimethylallyladenosine(37) in tRNA + (sulfur carrier)-SH + AH2 + 2 S-adenosyl-L-methionine = 2-methylsulfanyl-N(6)-dimethylallyladenosine(37) in tRNA + (sulfur carrier)-H + 5'-deoxyadenosine + L-methionine + A + S-adenosyl-L-homocysteine + 2 H(+). Its function is as follows. Catalyzes the methylthiolation of N6-(dimethylallyl)adenosine (i(6)A), leading to the formation of 2-methylthio-N6-(dimethylallyl)adenosine (ms(2)i(6)A) at position 37 in tRNAs that read codons beginning with uridine. This chain is tRNA-2-methylthio-N(6)-dimethylallyladenosine synthase, found in Staphylococcus haemolyticus (strain JCSC1435).